The following is a 283-amino-acid chain: MPELPEVETVRRGLNQLTLNRKITGGDVLLHRTIAHPFSVGDFLNGITGSTISTWHRRGKYLLAELSASPSTTSIPWLGVHLRMTGQLLWLNQDEPLHKHTRVRIFFEEEQELRFVDQRTFGQMWWVPPGIAVESVITGLAKLAVDPFSPEFTVEYLANKLHNRRRPIKTALLDQSVVAGLGNIYADEALFKSGVLPETLCTEVQLKQIKLLRTAIIQVLETSIEAGGTTFSNFLNVKGVNGNYGGVAWVYNRAGEPCKVCGDVIQRIKLGGRSSHFCRQCQV.

The active-site Schiff-base intermediate with DNA is the Pro2. Glu3 functions as the Proton donor in the catalytic mechanism. Lys60 acts as the Proton donor; for beta-elimination activity in catalysis. Residues His100, Arg119, and Arg164 each contribute to the DNA site. The FPG-type zinc finger occupies 249-283; that stretch reads WVYNRAGEPCKVCGDVIQRIKLGGRSSHFCRQCQV. Arg273 serves as the catalytic Proton donor; for delta-elimination activity.

The protein belongs to the FPG family. Monomer. Requires Zn(2+) as cofactor.

It catalyses the reaction Hydrolysis of DNA containing ring-opened 7-methylguanine residues, releasing 2,6-diamino-4-hydroxy-5-(N-methyl)formamidopyrimidine.. The catalysed reaction is 2'-deoxyribonucleotide-(2'-deoxyribose 5'-phosphate)-2'-deoxyribonucleotide-DNA = a 3'-end 2'-deoxyribonucleotide-(2,3-dehydro-2,3-deoxyribose 5'-phosphate)-DNA + a 5'-end 5'-phospho-2'-deoxyribonucleoside-DNA + H(+). Involved in base excision repair of DNA damaged by oxidation or by mutagenic agents. Acts as a DNA glycosylase that recognizes and removes damaged bases. Has a preference for oxidized purines, such as 7,8-dihydro-8-oxoguanine (8-oxoG). Has AP (apurinic/apyrimidinic) lyase activity and introduces nicks in the DNA strand. Cleaves the DNA backbone by beta-delta elimination to generate a single-strand break at the site of the removed base with both 3'- and 5'-phosphates. The chain is Formamidopyrimidine-DNA glycosylase from Nostoc sp. (strain PCC 7120 / SAG 25.82 / UTEX 2576).